Here is a 126-residue protein sequence, read N- to C-terminus: C-type natriuretic peptide (126 aa).

The N-terminal stretch at 1-23 (MHLSQLIACALLLALLSLRPSEA) is a signal peptide. A disordered region spans residues 19–71 (RPSEAKPGTPPKVPRTPPGEELAEPQAAGGNQKKGDKTPGGGGANLKGDRSRL). Residues 24-73 (KPGTPPKVPRTPPGEELAEPQAAGGNQKKGDKTPGGGGANLKGDRSRLLR) constitute a propeptide that is removed on maturation. Positions 26-35 (GTPPKVPRTP) are enriched in pro residues. Residues Cys-110 and Cys-126 are joined by a disulfide bond.

The protein belongs to the natriuretic peptide family. In terms of processing, degraded by IDE (in vitro). As to expression, expressed exclusively in brain.

The protein resides in the secreted. In terms of biological role, hormone which plays a role in endochondral ossification through regulation of cartilaginous growth plate chondrocytes proliferation and differentiation. May also be vasoactive and natriuretic. Acts by specifically binding and stimulating NPR2 to produce cGMP. Binds the clearance receptor NPR3. The protein is C-type natriuretic peptide (Nppc) of Rattus norvegicus (Rat).